We begin with the raw amino-acid sequence, 383 residues long: GTP-binding protein 10 homolog (383 aa).

An Obg domain is found at 22–157 (PSFLDTLRLA…RIVNLDLKLI (136 aa)). The OBG-type G domain occupies 158-353 (ADVGLVGFPN…VKSQLRRTLV (196 aa)). Residues 164 to 171 (GFPNAGKS), 211 to 215 (DLPGL), and 287 to 290 (NKMD) contribute to the GTP site.

It belongs to the TRAFAC class OBG-HflX-like GTPase superfamily. OBG GTPase family.

The protein localises to the nucleus. The protein resides in the nucleolus. Its function is as follows. May be involved in the ribosome maturation process. The sequence is that of GTP-binding protein 10 homolog from Drosophila pseudoobscura pseudoobscura (Fruit fly).